A 203-amino-acid chain; its full sequence is Chemotactic transduction protein ChpE (203 aa).

Transmembrane regions (helical) follow at residues 3–23 (AIFL…GAVF), 46–66 (LIGD…LLGY), 69–89 (VRIP…VQGL), 123–143 (NVVY…GTPN), and 149–169 (VFFA…AALV).

The protein belongs to the Rht family.

The protein resides in the cell membrane. The polypeptide is Chemotactic transduction protein ChpE (chpE) (Pseudomonas aeruginosa (strain ATCC 15692 / DSM 22644 / CIP 104116 / JCM 14847 / LMG 12228 / 1C / PRS 101 / PAO1)).